Reading from the N-terminus, the 528-residue chain is Protein arginine N-methyltransferase 3 (528 aa).

A disordered region spans residues 1 to 43 (MCSLAAGNGRGAELGPEPLELSDSGDDAGWEDEDADTEPAHGR). Position 2 is an N-acetylcysteine (C2). A phosphoserine mark is found at S22 and S24. The segment covering 23–37 (DSGDDAGWEDEDADT) has biased composition (acidic residues). A C2H2-type zinc finger spans residues 46-69 (TPCLFCDRLFASAEETFSHCKLEH). At S169 the chain carries Phosphoserine. Positions 184 to 528 (MKQFAQDFVM…NSSTQTYSLQ (345 aa)) are mediates interaction with ALDH1A1. The region spanning 214 to 528 (DGVYFSSYGH…NSSTQTYSLQ (315 aa)) is the SAM-dependent MTase PRMT-type domain. The S-adenosyl-L-homocysteine site is built by R236, G260, D282, S284, I310, and E311. Residues E326 and E335 contribute to the active site.

Belongs to the class I-like SAM-binding methyltransferase superfamily. Protein arginine N-methyltransferase family. In terms of assembly, monomer and homodimer. Interacts with EPB41L3 (via FERM domain); the interaction is direct and inhibits the protein-arginine N-methyltransferase activity of PRMT3. Interacts with the 40S ribosomal protein RPS2. Interacts with ALDH1A1; the interaction is direct, inhibits ALDH1A1 aldehyde dehydrogenase activity and is independent of the methyltransferase activity of PRMT3.

Its subcellular location is the cytoplasm. The protein resides in the cytosol. The protein localises to the nucleus. The catalysed reaction is L-arginyl-[protein] + S-adenosyl-L-methionine = N(omega)-methyl-L-arginyl-[protein] + S-adenosyl-L-homocysteine + H(+). It catalyses the reaction L-arginyl-[protein] + 2 S-adenosyl-L-methionine = N(omega),N(omega)-dimethyl-L-arginyl-[protein] + 2 S-adenosyl-L-homocysteine + 2 H(+). With respect to regulation, inhibited by N-ethylmaleimide and high concentrations of zinc chloride. Protein-arginine N-methyltransferase that catalyzes both the monomethylation and asymmetric dimethylation of the guanidino nitrogens of arginine residues in target proteins, and therefore falls into the group of type I methyltransferases. Catalyzes the asymmetric arginine dimethylation at multiple sites in the Arg/Gly-rich region of small ribosomal subunit protein uS5/RPS2. Also appears to methylate other ribosomal proteins. May regulate retinoic acid synthesis and signaling by inhibiting ALDH1A1 retinal dehydrogenase activity. Contributes to methylation of histone H4 'Arg-3', a specific tag for epigenetic transcriptional activation. Promotes osteogenesis. The sequence is that of Protein arginine N-methyltransferase 3 from Mus musculus (Mouse).